A 227-amino-acid polypeptide reads, in one-letter code: uncharacterized protein (227 aa).

In terms of domain architecture, RCK N-terminal spans 3-119; it reads RADFCIIGLG…STMGIREALI (117 aa). An RCK C-terminal domain is found at 134–221; it reads HGLENEIINL…LNKYLNYINP (88 aa).

This is an uncharacterized protein from Mycoplasma genitalium (strain ATCC 33530 / DSM 19775 / NCTC 10195 / G37) (Mycoplasmoides genitalium).